The following is a 356-amino-acid chain: Phosphoribosyl pyrophosphate synthase-associated protein 1 (356 aa).

M1 bears the N-acetylmethionine mark. N2 is subject to N-acetylproline. Residues S177 and S215 each carry the phosphoserine modification.

This sequence belongs to the ribose-phosphate pyrophosphokinase family. In terms of assembly, binds to PRPS1 and PRPS2. As to expression, ubiquitous.

Functionally, seems to play a negative regulatory role in 5-phosphoribose 1-diphosphate synthesis. This Homo sapiens (Human) protein is Phosphoribosyl pyrophosphate synthase-associated protein 1 (PRPSAP1).